Reading from the N-terminus, the 343-residue chain is uncharacterized protein (343 aa).

This is an uncharacterized protein from Tortricidae (ClGV).